We begin with the raw amino-acid sequence, 1744 residues long: Retrotransposon-like protein 1 (1744 aa).

3 disordered regions span residues 1-416 (MIEP…SPEE), 823-859 (READ…DQSG), and 1287-1439 (SSET…EVPS). Positions 19 to 30 (SSKQMESSEGSS) are enriched in low complexity. The segment covering 31-40 (NTVEETPGSS) has biased composition (polar residues). Residues 41–80 (GAQAGAQAGAQAEAQAETQVEAQAEAQAEAQVEAQVEAQA) show a composition bias toward low complexity. The segment covering 269-318 (DGSNQESSDGSNHELSNGSNHESSFGSNPESSDVSNLESSGGSNQESSDG) has biased composition (polar residues). Residues 332 to 361 (SDNSNQELSDNSNQESSDSSNQSSDISNQE) are compositionally biased toward low complexity. Composition is skewed to acidic residues over residues 385-407 (SDQD…GEEE), 837-846 (GSDDLSESEP), and 1291-1437 (EDKE…DEEV). 2 helical membrane passes run 1473–1493 (FFRG…LVML) and 1520–1540 (LILD…AQLL).

As to expression, expressed in placenta and in various tissues in late-fetal stage.

The protein localises to the membrane. Plays an essential role in capillaries endothelial cells for the maintenance of feto-maternal interface and for development of the placenta. The chain is Retrotransposon-like protein 1 (Rtl1) from Mus musculus (Mouse).